A 274-amino-acid chain; its full sequence is 2,3,4,5-tetrahydropyridine-2,6-dicarboxylate N-succinyltransferase (274 aa).

Substrate-binding residues include arginine 106 and aspartate 143.

It belongs to the transferase hexapeptide repeat family. Homotrimer.

The protein resides in the cytoplasm. The enzyme catalyses (S)-2,3,4,5-tetrahydrodipicolinate + succinyl-CoA + H2O = (S)-2-succinylamino-6-oxoheptanedioate + CoA. The protein operates within amino-acid biosynthesis; L-lysine biosynthesis via DAP pathway; LL-2,6-diaminopimelate from (S)-tetrahydrodipicolinate (succinylase route): step 1/3. The sequence is that of 2,3,4,5-tetrahydropyridine-2,6-dicarboxylate N-succinyltransferase from Rickettsia rickettsii (strain Sheila Smith).